We begin with the raw amino-acid sequence, 283 residues long: Thymidylate synthase (283 aa).

Arg22 is a dUMP binding site. Cys160 serves as the catalytic Nucleophile. DUMP-binding positions include 180-183, Asn191, and 221-223; these read RSCD and HIY. Asp183 is a (6R)-5,10-methylene-5,6,7,8-tetrahydrofolate binding site. Ser282 contacts (6R)-5,10-methylene-5,6,7,8-tetrahydrofolate.

It belongs to the thymidylate synthase family. Bacterial-type ThyA subfamily. Homodimer.

Its subcellular location is the cytoplasm. It carries out the reaction dUMP + (6R)-5,10-methylene-5,6,7,8-tetrahydrofolate = 7,8-dihydrofolate + dTMP. The protein operates within pyrimidine metabolism; dTTP biosynthesis. Catalyzes the reductive methylation of 2'-deoxyuridine-5'-monophosphate (dUMP) to 2'-deoxythymidine-5'-monophosphate (dTMP) while utilizing 5,10-methylenetetrahydrofolate (mTHF) as the methyl donor and reductant in the reaction, yielding dihydrofolate (DHF) as a by-product. This enzymatic reaction provides an intracellular de novo source of dTMP, an essential precursor for DNA biosynthesis. This is Thymidylate synthase from Tolumonas auensis (strain DSM 9187 / NBRC 110442 / TA 4).